The following is a 377-amino-acid chain: NADP-dependent oxidoreductase lnbE (377 aa).

NADP(+) is bound by residues glycine 170–glycine 173, leucine 257–serine 263, and serine 293–valine 295.

Belongs to the NADP-dependent oxidoreductase L4BD family.

Its pathway is secondary metabolite biosynthesis. Its function is as follows. NADP-dependent oxidoreductase; part of the lnb gene cluster that mediates the biosynthesis of diastereomeric piperazines. Lna and lnb clusters encode sets of enzymes that produce overlapping sets of previously undescribed metabolites such as piperazinomycin-like metabolites or morpholine. The lna and lnb biosynthetic pathways appear to be part of a signaling network that controls the formation of sclerotia, a resilient overwintering structure. One primary function of the non-canonical nonribosomal peptide synthetases lnaA and lnbA consists in the reduction of L-tyrosine. The presence in the clusters of tailoring enzymes such as the oxidoreductases lnaB, lnbB, lnaE or lnbE, as well as of the cytochrome P450 monooxygenases lnaC, lnaD, or lnbC, might explain formation of various diastereomeric piperazines. The sequence is that of NADP-dependent oxidoreductase lnbE from Aspergillus flavus (strain ATCC 200026 / FGSC A1120 / IAM 13836 / NRRL 3357 / JCM 12722 / SRRC 167).